A 224-amino-acid chain; its full sequence is 7-cyano-7-deazaguanine synthase (224 aa).

Residue 12–22 participates in ATP binding; it reads LSGGLDSSTVT. C193, C201, C204, and C207 together coordinate Zn(2+).

It belongs to the QueC family. Zn(2+) serves as cofactor.

It catalyses the reaction 7-carboxy-7-deazaguanine + NH4(+) + ATP = 7-cyano-7-deazaguanine + ADP + phosphate + H2O + H(+). It participates in purine metabolism; 7-cyano-7-deazaguanine biosynthesis. Functionally, catalyzes the ATP-dependent conversion of 7-carboxy-7-deazaguanine (CDG) to 7-cyano-7-deazaguanine (preQ(0)). The chain is 7-cyano-7-deazaguanine synthase from Prochlorococcus marinus (strain AS9601).